A 35-amino-acid chain; its full sequence is Mu-theraphotoxin-Ca2a (35 aa).

Disulfide bonds link Cys-2-Cys-17, Cys-9-Cys-24, and Cys-16-Cys-31.

This sequence belongs to the neurotoxin 10 (Hwtx-1) family. 10 (haplotoxin-1) subfamily. Expressed by the venom gland.

It localises to the secreted. Functionally, potently inhibits Nav1.7/SCN9A (IC(50)=98.1 nM), and moderately inhibits Nav1.2/SCN2A (IC(50)=216.3 nM), Nav1.6/SCN8A (IC(50)=313.6 nM), and Nav1.3/SCN3A (IC(50)=491.3 nM). Hyperpolarizes the slow inactivation, but does not alter the voltage-dependent activation or fast inactivation of Nav1.7/SCN9A. Binds with Nav1.7/SCN9A at the extracellular S3-S4 linker of domain II (site 4). In vivo, exhibits dose-dependent analgesic efficacy by reducing pain responses in rodent models of formalin-induced paw licking, hot plate test, and acetic acid-induced writhing. The polypeptide is Mu-theraphotoxin-Ca2a (Cyriopagopus albostriatus (Cambodian tiger tarantula)).